The following is a 201-amino-acid chain: 3-isopropylmalate dehydratase small subunit (201 aa).

This sequence belongs to the LeuD family. LeuD type 1 subfamily. As to quaternary structure, heterodimer of LeuC and LeuD.

The catalysed reaction is (2R,3S)-3-isopropylmalate = (2S)-2-isopropylmalate. It participates in amino-acid biosynthesis; L-leucine biosynthesis; L-leucine from 3-methyl-2-oxobutanoate: step 2/4. Catalyzes the isomerization between 2-isopropylmalate and 3-isopropylmalate, via the formation of 2-isopropylmaleate. The chain is 3-isopropylmalate dehydratase small subunit from Brucella anthropi (strain ATCC 49188 / DSM 6882 / CCUG 24695 / JCM 21032 / LMG 3331 / NBRC 15819 / NCTC 12168 / Alc 37) (Ochrobactrum anthropi).